We begin with the raw amino-acid sequence, 142 residues long: Putative pre-16S rRNA nuclease (142 aa).

This sequence belongs to the YqgF nuclease family.

It localises to the cytoplasm. Functionally, could be a nuclease involved in processing of the 5'-end of pre-16S rRNA. The polypeptide is Putative pre-16S rRNA nuclease (Prosthecochloris aestuarii (strain DSM 271 / SK 413)).